We begin with the raw amino-acid sequence, 192 residues long: Imidazole glycerol phosphate synthase subunit HisH (192 aa).

One can recognise a Glutamine amidotransferase type-1 domain in the interval 1 to 192; sequence MIAIIDYGLG…QALKGGFIND (192 aa). The active-site Nucleophile is C77. Active-site residues include H169 and E171.

As to quaternary structure, heterodimer of HisH and HisF.

It is found in the cytoplasm. It catalyses the reaction 5-[(5-phospho-1-deoxy-D-ribulos-1-ylimino)methylamino]-1-(5-phospho-beta-D-ribosyl)imidazole-4-carboxamide + L-glutamine = D-erythro-1-(imidazol-4-yl)glycerol 3-phosphate + 5-amino-1-(5-phospho-beta-D-ribosyl)imidazole-4-carboxamide + L-glutamate + H(+). It carries out the reaction L-glutamine + H2O = L-glutamate + NH4(+). It participates in amino-acid biosynthesis; L-histidine biosynthesis; L-histidine from 5-phospho-alpha-D-ribose 1-diphosphate: step 5/9. In terms of biological role, IGPS catalyzes the conversion of PRFAR and glutamine to IGP, AICAR and glutamate. The HisH subunit catalyzes the hydrolysis of glutamine to glutamate and ammonia as part of the synthesis of IGP and AICAR. The resulting ammonia molecule is channeled to the active site of HisF. The protein is Imidazole glycerol phosphate synthase subunit HisH of Staphylococcus epidermidis (strain ATCC 35984 / DSM 28319 / BCRC 17069 / CCUG 31568 / BM 3577 / RP62A).